A 681-amino-acid polypeptide reads, in one-letter code: DNA ligase (681 aa).

Residues 32–36, 81–82, and glutamate 113 contribute to the NAD(+) site; these read DIEYD and SL. Catalysis depends on lysine 115, which acts as the N6-AMP-lysine intermediate. Arginine 136, glutamate 173, lysine 290, and lysine 314 together coordinate NAD(+). The Zn(2+) site is built by cysteine 408, cysteine 411, cysteine 426, and cysteine 432. Residues 596-681 form the BRCT domain; sequence EIDSPFAGKT…LNNHGDVSTL (86 aa).

The protein belongs to the NAD-dependent DNA ligase family. LigA subfamily. The cofactor is Mg(2+). It depends on Mn(2+) as a cofactor.

The catalysed reaction is NAD(+) + (deoxyribonucleotide)n-3'-hydroxyl + 5'-phospho-(deoxyribonucleotide)m = (deoxyribonucleotide)n+m + AMP + beta-nicotinamide D-nucleotide.. DNA ligase that catalyzes the formation of phosphodiester linkages between 5'-phosphoryl and 3'-hydroxyl groups in double-stranded DNA using NAD as a coenzyme and as the energy source for the reaction. It is essential for DNA replication and repair of damaged DNA. In Pectobacterium atrosepticum (strain SCRI 1043 / ATCC BAA-672) (Erwinia carotovora subsp. atroseptica), this protein is DNA ligase.